A 257-amino-acid polypeptide reads, in one-letter code: ATP synthase subunit a (257 aa).

The next 6 membrane-spanning stretches (helical) occupy residues 34-54, 93-113, 122-142, 149-169, 187-207, and 210-230; these read ITNI…FSIL, YFPF…IGMV, HFIL…VLGF, FFSL…LVLI, ANIL…YNIM, and GIIF…FSGL.

This sequence belongs to the ATPase A chain family. F-type ATPases have 2 components, CF(1) - the catalytic core - and CF(0) - the membrane proton channel. CF(1) has five subunits: alpha(3), beta(3), gamma(1), delta(1), epsilon(1). CF(0) has three main subunits: a, b and c.

The protein localises to the mitochondrion inner membrane. Its function is as follows. Mitochondrial membrane ATP synthase (F(1)F(0) ATP synthase or Complex V) produces ATP from ADP in the presence of a proton gradient across the membrane which is generated by electron transport complexes of the respiratory chain. F-type ATPases consist of two structural domains, F(1) - containing the extramembraneous catalytic core and F(0) - containing the membrane proton channel, linked together by a central stalk and a peripheral stalk. During catalysis, ATP synthesis in the catalytic domain of F(1) is coupled via a rotary mechanism of the central stalk subunits to proton translocation. Key component of the proton channel; it may play a direct role in the translocation of protons across the membrane. In Cochliobolus heterostrophus (Southern corn leaf blight fungus), this protein is ATP synthase subunit a (ATP6).